Here is a 162-residue protein sequence, read N- to C-terminus: Caveolin-2 (162 aa).

Over Met-1 to Lys-86 the chain is Cytoplasmic. The residue at position 19 (Tyr-19) is a Phosphotyrosine; by SRC. Ser-20 is subject to Phosphoserine. Tyr-27 carries the phosphotyrosine; by SRC modification. The residue at position 36 (Ser-36) is a Phosphoserine. Positions Phe-87–Leu-107 form an intramembrane region, helical. Topologically, residues Ser-108 to Asp-162 are cytoplasmic.

The protein belongs to the caveolin family. Monomer or homodimer. Interacts with CAV1; the interaction forms a stable heterooligomeric complex that is required for targeting to lipid rafts and for caveolae formation. Tyrosine phosphorylated forms do not form heterooligomers with the Tyr-19-phosphorylated form existing as a monomer or dimer, and the Tyr-27-form as a monomer only. Interacts (tyrosine phosphorylated form) with the SH2 domain-containing proteins, RASA1, NCK1 and SRC. Interacts (tyrosine phosphorylated form) with INSR, the interaction (Tyr-27-phosphorylated form) is increased on insulin stimulation. Interacts (Tyr-19 phosphorylated form) with MAPK1 (phosphorylated form); the interaction, promoted by insulin, leads to nuclear location and MAPK1 activation. Interacts with STAT3; the interaction is increased on insulin-induced tyrosine phosphorylation leading to STAT activation. Phosphorylated on serine and tyrosine residues. Phosphorylation on Ser-36 appears to modulate mitosis in endothelial cells. Phosphorylation on both Tyr-19 and Tyr-27 is required for insulin-induced 'Ser-727' phosphorylation of STAT3 and its activation. Phosphorylation on Tyr-19 is required for insulin-induced phosphorylation of MAPK1 and DNA binding of STAT3. Tyrosine phosphorylation is induced by both EGF and insulin.

The protein localises to the nucleus. Its subcellular location is the cytoplasm. The protein resides in the golgi apparatus membrane. It localises to the cell membrane. It is found in the membrane. The protein localises to the caveola. Its function is as follows. May act as a scaffolding protein within caveolar membranes. Interacts directly with G-protein alpha subunits and can functionally regulate their activity. Acts as an accessory protein in conjunction with CAV1 in targeting to lipid rafts and driving caveolae formation. The Ser-36 phosphorylated form has a role in modulating mitosis in endothelial cells. Positive regulator of cellular mitogenesis of the MAPK signaling pathway. Required for the insulin-stimulated nuclear translocation and activation of MAPK1 and STAT3, and the subsequent regulation of cell cycle progression. The sequence is that of Caveolin-2 (CAV2) from Eulemur macaco macaco (Black lemur).